Here is a 324-residue protein sequence, read N- to C-terminus: Cyclic GMP-AMP synthase CdnE03 (324 aa).

Mg(2+) is bound by residues aspartate 87 and aspartate 89. ATP-binding positions include aspartate 89, asparagine 144 to lysine 145, and aspartate 159. A Mg(2+)-binding site is contributed by aspartate 159. GTP is bound by residues lysine 224 and serine 243.

This sequence belongs to the CD-NTase family. E03 subfamily. The cofactor is Mg(2+).

The catalysed reaction is GTP + ATP = 3',2'-cGAMP + 2 diphosphate. With respect to regulation, activated by a virus-derived, approximately 400 nucleotide RNA (called CBASS-activating bacteriophage RNA, cabRNA) that begins in the viral terminase subunit terS and extends into terL. RNA secondary and/or tertiary structure, as well as viral infection itself, are important for CdnE activation. A much longer RNA (escaper RNA) with a different secondary structure, derived from a terS-mutated virus still binds to this protein, but does not activate its nucleotide cyclase activity. Shorter viral-derived RNAs (34 and 49 nt) with extensive predicted secondary structure also activate the enzyme, although not as well as full-length cabRNA. Cyclic nucleotide synthase (second messenger synthase) of a CBASS antivirus system. CBASS (cyclic oligonucleotide-based antiphage signaling system) provides immunity against bacteriophage. The CD-NTase protein synthesizes cyclic nucleotides in response to infection; these serve as specific second messenger signals. The signals activate a diverse range of effectors, leading to bacterial cell death and thus abortive phage infection. The effector for this system is downstream Cap15. A type I-B CBASS system. Its function is as follows. Cyclic dinucleotide synthase that catalyzes the synthesis of 3',2'-cyclic GMP-AMP (cGAMP) from GTP and ATP upon activation by viral-derived cabRNA. Binds cabRNA via positive charges in its N-terminus. In terms of biological role, protects S.aureus against phage infection. When the CBASS operon (cdnE-cap15) is introduced in S.aureus strain RN4220 there is strong protection against lytic DNA phages 80alpha-vir and phi-NM1-gamma-6 but little to no protection against phages phi-NM4-gamma-4 or phi-12-gamma-3. In Staphylococcus schleiferi, this protein is Cyclic GMP-AMP synthase CdnE03.